The chain runs to 530 residues: Neutral amino acid transporter A (530 aa).

An N-acetylmethionine modification is found at Met1. The segment covering 1-10 (MEKSSETNGY) has biased composition (polar residues). The segment at 1-28 (MEKSSETNGYLDSAQEGPAAGPGEPGTT) is disordered. Topologically, residues 1–41 (MEKSSETNGYLDSAQEGPAAGPGEPGTTARRAGRCAGFLRR) are cytoplasmic. A compositionally biased stretch (low complexity) spans 16-28 (EGPAAGPGEPGTT). Helical transmembrane passes span 42 to 62 (HGLV…GAAL), 88 to 108 (MIIL…LDAS), and 119 to 139 (AYFG…AFII). The Extracellular segment spans residues 140-216 (KPGSGSQTLQ…VTIEKIPIGT (77 aa)). Asn201 carries an N-linked (GlcNAc...) asparagine glycan. The next 6 helical transmembrane spans lie at 217-237 (EIEG…GVAL), 257-277 (ATMV…MFLV), 298-318 (IFTS…LIYF), 328-348 (FLLG…SSAT), 373-393 (IGAT…AVFI), and 418-438 (VGAA…LEAI). The tract at residues 488 to 530 (ELSEVKVEAIPNSKSEEETSPLVTHPNPTGPAASTPESKESVL) is disordered. Phosphoserine is present on residues Ser507, Ser525, and Ser528.

It belongs to the dicarboxylate/amino acid:cation symporter (DAACS) (TC 2.A.23) family. SLC1A4 subfamily.

Its subcellular location is the membrane. It localises to the melanosome. The enzyme catalyses L-threonine(in) + Na(+)(in) = L-threonine(out) + Na(+)(out). It catalyses the reaction L-serine(in) + Na(+)(in) = L-serine(out) + Na(+)(out). It carries out the reaction L-cysteine(in) + Na(+)(in) = L-cysteine(out) + Na(+)(out). The catalysed reaction is L-alanine(in) + Na(+)(in) = L-alanine(out) + Na(+)(out). The enzyme catalyses L-proline(in) + Na(+)(in) = L-proline(out) + Na(+)(out). It catalyses the reaction 4-hydroxy-L-proline(in) + Na(+)(in) = 4-hydroxy-L-proline(out) + Na(+)(out). Sodium-dependent neutral amino-acid transporter that mediates transport of alanine, serine, cysteine, proline, hydroxyproline and threonine. The sequence is that of Neutral amino acid transporter A (SLC1A4) from Bos taurus (Bovine).